Here is an 849-residue protein sequence, read N- to C-terminus: DNA mismatch repair protein MutS (849 aa).

ATP is bound at residue 665 to 672 (GPNMAGKS).

Belongs to the DNA mismatch repair MutS family.

Its function is as follows. This protein is involved in the repair of mismatches in DNA. It is possible that it carries out the mismatch recognition step. This protein has a weak ATPase activity. The protein is DNA mismatch repair protein MutS of Wolbachia pipientis wMel.